Reading from the N-terminus, the 340-residue chain is Protein RecA (340 aa).

ATP is bound at residue 74–81; the sequence is GPESSGKT.

This sequence belongs to the RecA family.

Its subcellular location is the cytoplasm. In terms of biological role, can catalyze the hydrolysis of ATP in the presence of single-stranded DNA, the ATP-dependent uptake of single-stranded DNA by duplex DNA, and the ATP-dependent hybridization of homologous single-stranded DNAs. It interacts with LexA causing its activation and leading to its autocatalytic cleavage. In Porphyromonas gingivalis (strain ATCC 33277 / DSM 20709 / CIP 103683 / JCM 12257 / NCTC 11834 / 2561), this protein is Protein RecA.